We begin with the raw amino-acid sequence, 280 residues long: uncharacterized protein (280 aa).

The next 3 helical transmembrane spans lie at 10 to 29 (IQQNGILTAVITGIVALLFN), 164 to 186 (FVFVRWFKETLAFFVGASAFAFI), and 209 to 228 (IFGLSCSALYIFWIIHYFLL).

It is found in the cell membrane. This is an uncharacterized protein from Bacillus subtilis (strain 168).